The sequence spans 118 residues: Large ribosomal subunit protein uL24 (118 aa).

Belongs to the universal ribosomal protein uL24 family. In terms of assembly, part of the 50S ribosomal subunit.

One of two assembly initiator proteins, it binds directly to the 5'-end of the 23S rRNA, where it nucleates assembly of the 50S subunit. Functionally, one of the proteins that surrounds the polypeptide exit tunnel on the outside of the subunit. The chain is Large ribosomal subunit protein uL24 from Synechococcus sp. (strain WH7803).